A 1872-amino-acid chain; its full sequence is Ral GTPase-activating protein subunit alpha-2 (1872 aa).

Phosphoserine occurs at positions 373, 376, and 379. A compositionally biased stretch (basic and acidic residues) spans Asp446–Ser469. Residues Asp446 to Trp481 are disordered. Phosphoserine occurs at positions 486 and 696. Disordered stretches follow at residues Phe711–Arg730 and Gln758–Asp849. The residue at position 715 (Thr715) is a Phosphothreonine; by PKB. Positions Ser775–Lys795 are enriched in polar residues. A compositionally biased stretch (basic and acidic residues) spans Ser796–Gly810. Phosphoserine occurs at positions 819 and 820. Residues Leu824–Ser843 are compositionally biased toward basic and acidic residues. A Phosphoserine modification is found at Ser1592. One can recognise a Rap-GAP domain in the interval Leu1634–Ile1842.

Component of the heterodimeric RalGAP2 complex with RALGAPB. Heterodimerization is required for activity. Highly expressed in lung, liver, testis and thymus with lower levels in brain and heart (at protein level).

It localises to the cytoplasm. Its function is as follows. Catalytic subunit of the heterodimeric RalGAP2 complex which acts as a GTPase activator for the Ras-like small GTPases RALA and RALB. The protein is Ral GTPase-activating protein subunit alpha-2 of Rattus norvegicus (Rat).